A 569-amino-acid polypeptide reads, in one-letter code: Amyloid-beta A4 precursor protein-binding family A member 3 (569 aa).

Met-1 is subject to N-acetylmethionine. 2 disordered regions span residues Met-1–Asp-53 and Ala-124–Glu-168. A compositionally biased stretch (basic and acidic residues) spans Glu-19 to Pro-32. Residues Ala-132–Pro-141 show a composition bias toward low complexity. A phosphoserine mark is found at Ser-166 and Ser-367. Positions Asp-212–Gly-376 constitute a PID domain. PDZ domains are found at residues Glu-389 to Cys-475 and Thr-480 to Ala-554.

Binds to the cytoplasmic domain of amyloid protein (APP). Interacts with HIF1AN (via N-terminus). Interacts with NECAB3; seems to mediate the interaction between NECAB3 and HIF1AN. In terms of tissue distribution, ubiquitous.

The protein resides in the cytoplasm. It is found in the perinuclear region. Functionally, may modulate processing of the amyloid-beta precursor protein (APP) and hence formation of APP-beta. May enhance the activity of HIF1A in macrophages by inhibiting the activity of HIF1AN. The sequence is that of Amyloid-beta A4 precursor protein-binding family A member 3 (Apba3) from Rattus norvegicus (Rat).